A 406-amino-acid chain; its full sequence is Glutamyl-tRNA reductase (406 aa).

Substrate is bound by residues Thr51–Arg54, Ser101, Glu106–Glu108, and Gln112. Cys52 serves as the catalytic Nucleophile. Gly180–Gly185 provides a ligand contact to NADP(+).

Belongs to the glutamyl-tRNA reductase family. Homodimer.

It carries out the reaction (S)-4-amino-5-oxopentanoate + tRNA(Glu) + NADP(+) = L-glutamyl-tRNA(Glu) + NADPH + H(+). Its pathway is porphyrin-containing compound metabolism; protoporphyrin-IX biosynthesis; 5-aminolevulinate from L-glutamyl-tRNA(Glu): step 1/2. In terms of biological role, catalyzes the NADPH-dependent reduction of glutamyl-tRNA(Glu) to glutamate 1-semialdehyde (GSA). This Caldivirga maquilingensis (strain ATCC 700844 / DSM 13496 / JCM 10307 / IC-167) protein is Glutamyl-tRNA reductase.